A 152-amino-acid polypeptide reads, in one-letter code: SsrA-binding protein (152 aa).

The protein belongs to the SmpB family.

The protein localises to the cytoplasm. Its function is as follows. Required for rescue of stalled ribosomes mediated by trans-translation. Binds to transfer-messenger RNA (tmRNA), required for stable association of tmRNA with ribosomes. tmRNA and SmpB together mimic tRNA shape, replacing the anticodon stem-loop with SmpB. tmRNA is encoded by the ssrA gene; the 2 termini fold to resemble tRNA(Ala) and it encodes a 'tag peptide', a short internal open reading frame. During trans-translation Ala-aminoacylated tmRNA acts like a tRNA, entering the A-site of stalled ribosomes, displacing the stalled mRNA. The ribosome then switches to translate the ORF on the tmRNA; the nascent peptide is terminated with the 'tag peptide' encoded by the tmRNA and targeted for degradation. The ribosome is freed to recommence translation, which seems to be the essential function of trans-translation. The chain is SsrA-binding protein from Rickettsia felis (strain ATCC VR-1525 / URRWXCal2) (Rickettsia azadi).